The following is a 434-amino-acid chain: UDP-N-acetylmuramate--L-alanine ligase (434 aa).

108 to 114 provides a ligand contact to ATP; that stretch reads GSHGKTT.

Belongs to the MurCDEF family.

The protein localises to the cytoplasm. It catalyses the reaction UDP-N-acetyl-alpha-D-muramate + L-alanine + ATP = UDP-N-acetyl-alpha-D-muramoyl-L-alanine + ADP + phosphate + H(+). It participates in cell wall biogenesis; peptidoglycan biosynthesis. In terms of biological role, cell wall formation. This is UDP-N-acetylmuramate--L-alanine ligase from Geobacillus kaustophilus (strain HTA426).